A 427-amino-acid polypeptide reads, in one-letter code: Glutamate-1-semialdehyde 2,1-aminomutase (427 aa).

Lys265 bears the N6-(pyridoxal phosphate)lysine mark.

It belongs to the class-III pyridoxal-phosphate-dependent aminotransferase family. HemL subfamily. In terms of assembly, homodimer. Pyridoxal 5'-phosphate is required as a cofactor.

It is found in the cytoplasm. It catalyses the reaction (S)-4-amino-5-oxopentanoate = 5-aminolevulinate. The protein operates within porphyrin-containing compound metabolism; protoporphyrin-IX biosynthesis; 5-aminolevulinate from L-glutamyl-tRNA(Glu): step 2/2. The sequence is that of Glutamate-1-semialdehyde 2,1-aminomutase from Actinobacillus succinogenes (strain ATCC 55618 / DSM 22257 / CCUG 43843 / 130Z).